The primary structure comprises 450 residues: UDP-N-acetylmuramoylalanine--D-glutamate ligase (450 aa).

119-125 (GSNGKTT) lines the ATP pocket.

It belongs to the MurCDEF family.

Its subcellular location is the cytoplasm. It carries out the reaction UDP-N-acetyl-alpha-D-muramoyl-L-alanine + D-glutamate + ATP = UDP-N-acetyl-alpha-D-muramoyl-L-alanyl-D-glutamate + ADP + phosphate + H(+). Its pathway is cell wall biogenesis; peptidoglycan biosynthesis. In terms of biological role, cell wall formation. Catalyzes the addition of glutamate to the nucleotide precursor UDP-N-acetylmuramoyl-L-alanine (UMA). In Streptococcus pneumoniae (strain Taiwan19F-14), this protein is UDP-N-acetylmuramoylalanine--D-glutamate ligase.